We begin with the raw amino-acid sequence, 241 residues long: NAD(P)H-quinone oxidoreductase subunit K (241 aa).

Residues C60, C61, C125, and C156 each coordinate [4Fe-4S] cluster. Positions 220-241 (SSQKEKITELPEKTEITNTEKD) are disordered. Residues 222-241 (QKEKITELPEKTEITNTEKD) are compositionally biased toward basic and acidic residues.

It belongs to the complex I 20 kDa subunit family. As to quaternary structure, NDH-1 can be composed of about 15 different subunits; different subcomplexes with different compositions have been identified which probably have different functions. It depends on [4Fe-4S] cluster as a cofactor.

The protein localises to the cellular thylakoid membrane. The enzyme catalyses a plastoquinone + NADH + (n+1) H(+)(in) = a plastoquinol + NAD(+) + n H(+)(out). It carries out the reaction a plastoquinone + NADPH + (n+1) H(+)(in) = a plastoquinol + NADP(+) + n H(+)(out). NDH-1 shuttles electrons from an unknown electron donor, via FMN and iron-sulfur (Fe-S) centers, to quinones in the respiratory and/or the photosynthetic chain. The immediate electron acceptor for the enzyme in this species is believed to be plastoquinone. Couples the redox reaction to proton translocation, and thus conserves the redox energy in a proton gradient. Cyanobacterial NDH-1 also plays a role in inorganic carbon-concentration. The polypeptide is NAD(P)H-quinone oxidoreductase subunit K (Prochlorococcus marinus (strain MIT 9215)).